A 4699-amino-acid chain; its full sequence is Fat-like cadherin-related tumor suppressor homolog (4699 aa).

An N-terminal signal peptide occupies residues methionine 1 to serine 38. Residues lysine 39–glycine 4285 lie on the Extracellular side of the membrane. 34 Cadherin domains span residues serine 63–phenylalanine 183, tyrosine 184–isoleucine 291, alanine 288–phenylalanine 400, threonine 401–phenylalanine 507, glutamate 508–phenylalanine 613, glutamate 614–leucine 716, valine 773–isoleucine 877, glutamine 878–phenylalanine 980, glycine 981–phenylalanine 1088, aspartate 1089–tyrosine 1198, aspartate 1194–phenylalanine 1299, aspartate 1300–isoleucine 1405, lysine 1408–phenylalanine 1506, alanine 1507–phenylalanine 1612, threonine 1613–phenylalanine 1717, proline 1718–phenylalanine 1815, valine 1816–phenylalanine 1932, asparagine 1933–phenylalanine 2033, glutamine 2034–phenylalanine 2140, valine 2141–phenylalanine 2241, glutamate 2242–isoleucine 2341, glutamate 2342–phenylalanine 2449, valine 2450–phenylalanine 2551, aspartate 2552–phenylalanine 2654, leucine 2655–phenylalanine 2763, glutamate 2764–phenylalanine 2860, aspartate 2861–phenylalanine 2967, lysine 2968–tyrosine 3072, leucine 3068–phenylalanine 3169, serine 3170–phenylalanine 3273, serine 3274–phenylalanine 3378, leucine 3379–phenylalanine 3483, serine 3484–valine 3588, and threonine 3589–phenylalanine 3696. Residues asparagine 68 and asparagine 159 are each glycosylated (N-linked (GlcNAc...) asparagine). An N-linked (GlcNAc...) asparagine glycan is attached at asparagine 367. Residues asparagine 782, asparagine 846, and asparagine 926 are each glycosylated (N-linked (GlcNAc...) asparagine). Asparagine 1109, asparagine 1201, asparagine 1315, asparagine 1442, asparagine 1476, and asparagine 1514 each carry an N-linked (GlcNAc...) asparagine glycan. 19 cysteine pairs are disulfide-bonded: cysteine 3807–cysteine 3819, cysteine 3814–cysteine 3851, cysteine 3853–cysteine 3862, cysteine 3869–cysteine 3880, cysteine 3874–cysteine 3891, cysteine 3893–cysteine 3902, cysteine 4071–cysteine 4105, cysteine 4117–cysteine 4128, cysteine 4122–cysteine 4138, cysteine 4140–cysteine 4149, cysteine 4156–cysteine 4167, cysteine 4161–cysteine 4177, cysteine 4179–cysteine 4188, cysteine 4194–cysteine 4205, cysteine 4199–cysteine 4214, cysteine 4216–cysteine 4224, cysteine 4231–cysteine 4242, cysteine 4236–cysteine 4251, and cysteine 4253–cysteine 4262. The 39-residue stretch at threonine 3865–glutamate 3903 folds into the EGF-like 1 domain. In terms of domain architecture, Laminin G-like spans alanine 3921–cysteine 4105. EGF-like domains are found at residues arginine 4113–glutamate 4150, aspartate 4152–glutamate 4189, tyrosine 4190–glutamate 4225, and aspartate 4227–glycine 4263. A helical transmembrane segment spans residues isoleucine 4286–leucine 4306. Topologically, residues lysine 4307–asparagine 4699 are cytoplasmic.

As to expression, localizes where basal actin filaments terminate.

The protein localises to the cell membrane. Its function is as follows. Required for the planar polarity of actin filament orientation at the basal side of ovarian follicle cells. Required for proper egg chamber shape and elongation of the egg chamber during oogenesis. Required for the correct planar polarization of Rab10 within the basal follicle cell epithelium and is therefore indirectly involved in the Rab10-dependent remodeling of the basal membrane during egg chamber elongation. The polypeptide is Fat-like cadherin-related tumor suppressor homolog (kug) (Drosophila melanogaster (Fruit fly)).